The following is a 346-amino-acid chain: Protein RecA (346 aa).

An ATP-binding site is contributed by 64–71; that stretch reads GPESSGKT.

It belongs to the RecA family.

It localises to the cytoplasm. Can catalyze the hydrolysis of ATP in the presence of single-stranded DNA, the ATP-dependent uptake of single-stranded DNA by duplex DNA, and the ATP-dependent hybridization of homologous single-stranded DNAs. It interacts with LexA causing its activation and leading to its autocatalytic cleavage. In Bacillus pumilus (strain SAFR-032), this protein is Protein RecA.